The following is an 836-amino-acid chain: MLRLMRQKKLSIQRRTKTTVSSTTTGGKSKEVQVEVRKKRTVKTDIAQQEEAKLKAQQEAEAKKIAEQKAIEEKARLEAEKVAAKKEADEKVKAETAKPVKSAVDSKVKSVDPEKEKRKAEEAELRRKAEELARQKAEEQARRAAEEAKRYAEADDSDNESSSEDYSDYNLSSRYALEAEDEEDRRNENRGRGKNKVAKAKKGGRDDENSKNSKNERESNRKNQKDAKFGKGKNGKKGAALQQAFTKPAQVVKSDVVIGETITVAELANKMAVKATEIIKMMMKMGEMVTINQVIDQETAQLVAEELGHKVILRNENELEEAVLGDRDVNAEKVTRAPVVTIMGHVDHGKTSLLDYIRKAKVAAGEAGGITQHIGAYHVEMDDGKMITFLDTPGHAAFTSMRARGAKATDIVVLVVAADDGVMPQTIEAIQHAKAAGAPLVVAVNKIDKPEANLDRVEQELLQHDVISEKFGGDVQFVPVSAKKGTGVDDLLDAILLQSEVLELTAVKDGMASGVVIESYLDKGRGPVATILVQSGTLRKGDIVLCGFEYGRVRAMRDENGKEVDEAGPSIPVELLGLSGVPAAGDEATVVRDEKKAREVALYRQGKFREVKLARQQKAKLENMFSNMSEGDVAELNVIVKADVQGSVEAIVQALNELSTNEVKVKVVGSGVGGITETDATLATASNAIIVGFNVRADATARRVIEAENIDLRYYSIIYELLNEIKAAMSGMLEPEFKQEIIGLAEVRDVFRHPKFGAIAGCMVTEGVVKRNNPIRVLRDNVVIFEGELESLRRFKDDVSEVRNGMECGIGVKNYNDVKVGDQIEVFEVVEVKRSI.

The span at 1–17 (MLRLMRQKKLSIQRRTK) shows a compositional bias: basic residues. Disordered regions lie at residues 1–43 (MLRL…RTVK) and 83–240 (AAKK…KGAA). The segment covering 18–27 (TTVSSTTTGG) has biased composition (low complexity). The segment covering 83–153 (AAKKEADEKV…AAEEAKRYAE (71 aa)) has biased composition (basic and acidic residues). A compositionally biased stretch (acidic residues) spans 154–167 (ADDSDNESSSEDYS). A compositionally biased stretch (basic residues) spans 192–202 (RGKNKVAKAKK). The span at 203–229 (GGRDDENSKNSKNERESNRKNQKDAKF) shows a compositional bias: basic and acidic residues. The 171-residue stretch at 335–505 (TRAPVVTIMG…LLQSEVLELT (171 aa)) folds into the tr-type G domain. Residues 344–351 (GHVDHGKT) form a G1 region. 344-351 (GHVDHGKT) provides a ligand contact to GTP. The G2 stretch occupies residues 369 to 373 (GITQH). The interval 391–394 (DTPG) is G3. GTP is bound by residues 391–395 (DTPGH) and 445–448 (NKID). The segment at 445 to 448 (NKID) is G4. Positions 481-483 (SAK) are G5.

Belongs to the TRAFAC class translation factor GTPase superfamily. Classic translation factor GTPase family. IF-2 subfamily.

Its subcellular location is the cytoplasm. One of the essential components for the initiation of protein synthesis. Protects formylmethionyl-tRNA from spontaneous hydrolysis and promotes its binding to the 30S ribosomal subunits. Also involved in the hydrolysis of GTP during the formation of the 70S ribosomal complex. The sequence is that of Translation initiation factor IF-2 from Haemophilus influenzae (strain PittEE).